A 218-amino-acid chain; its full sequence is Cytochrome b6 (218 aa).

The chain crosses the membrane as a helical span at residues 35-55 (IFYCLGGITLVCFLIQFATGF). C38 is a binding site for heme c. Heme b-binding residues include H89 and H103. The next 3 helical transmembrane spans lie at 93–113 (ASMM…TGGF), 119–139 (LTWV…VTGY), and 189–209 (LHTF…FLMI). Heme b is bound by residues H190 and H205.

Belongs to the cytochrome b family. PetB subfamily. As to quaternary structure, the 4 large subunits of the cytochrome b6-f complex are cytochrome b6, subunit IV (17 kDa polypeptide, PetD), cytochrome f and the Rieske protein, while the 4 small subunits are PetG, PetL, PetM and PetN. The complex functions as a dimer. Heme b is required as a cofactor. Heme c serves as cofactor.

Its subcellular location is the cellular thylakoid membrane. Functionally, component of the cytochrome b6-f complex, which mediates electron transfer between photosystem II (PSII) and photosystem I (PSI), cyclic electron flow around PSI, and state transitions. The chain is Cytochrome b6 from Parasynechococcus marenigrum (strain WH8102).